Consider the following 451-residue polypeptide: uncharacterized protein (451 aa).

Residues 29–204 form the FAD-binding PCMH-type domain; it reads LERYPDIIVF…TSMTFKAVPI (176 aa). Histidine 66 carries the pros-8alpha-FAD histidine modification.

Belongs to the oxygen-dependent FAD-linked oxidoreductase family. The cofactor is FAD.

This is an uncharacterized protein from Bacillus subtilis (strain 168).